A 799-amino-acid polypeptide reads, in one-letter code: Elongation factor G, mitochondrial (799 aa).

The transit peptide at 1-24 (MRCPSLARLPHRAVSGLTRTPVRF) directs the protein to the mitochondrion. Positions 97 to 384 (SRVRNIGIAA…GVIDYLPNPS (288 aa)) constitute a tr-type G domain. Residues 106 to 113 (AHIDSGKT), 182 to 186 (DTPGH), and 236 to 239 (NKMD) each bind GTP.

This sequence belongs to the TRAFAC class translation factor GTPase superfamily. Classic translation factor GTPase family. EF-G/EF-2 subfamily.

It is found in the mitochondrion. It participates in protein biosynthesis; polypeptide chain elongation. Functionally, mitochondrial GTPase that catalyzes the GTP-dependent ribosomal translocation step during translation elongation. During this step, the ribosome changes from the pre-translocational (PRE) to the post-translocational (POST) state as the newly formed A-site-bound peptidyl-tRNA and P-site-bound deacylated tRNA move to the P and E sites, respectively. Catalyzes the coordinated movement of the two tRNA molecules, the mRNA and conformational changes in the ribosome. The protein is Elongation factor G, mitochondrial (mef1) of Emericella nidulans (strain FGSC A4 / ATCC 38163 / CBS 112.46 / NRRL 194 / M139) (Aspergillus nidulans).